The following is a 66-amino-acid chain: Large ribosomal subunit protein bL33c (66 aa).

This sequence belongs to the bacterial ribosomal protein bL33 family.

The protein resides in the plastid. It localises to the chloroplast. The protein is Large ribosomal subunit protein bL33c of Crucihimalaya wallichii (Rock-cress).